Reading from the N-terminus, the 99-residue chain is uncharacterized protein (99 aa).

The TM2 domain occupies 32–79 (KKSVGIAVLLSFIIPGAGQMYLGRVGKGIILLLTCWLIIPWIYSIYDA). Transmembrane regions (helical) follow at residues 34–54 (SVGIAVLLSFIIPGAGQMYLG) and 56–76 (VGKGIILLLTCWLIIPWIYSI).

It localises to the cell membrane. This is an uncharacterized protein from Methanocaldococcus jannaschii (strain ATCC 43067 / DSM 2661 / JAL-1 / JCM 10045 / NBRC 100440) (Methanococcus jannaschii).